Reading from the N-terminus, the 447-residue chain is CBL-interacting serine/threonine-protein kinase 9 (447 aa).

Residues 19–274 (YEMGRTLGEG…IAELLEDEWF (256 aa)) form the Protein kinase domain. ATP contacts are provided by residues 25-33 (LGEGSFAKV) and K48. D142 functions as the Proton acceptor in the catalytic mechanism. An activation loop region spans residues 160-189 (DFGLSAFSRQVREDGLLHTACGTPNYVAPE). S164 is subject to Phosphoserine. T178 is modified (phosphothreonine). One can recognise an NAF domain in the interval 312–336 (EKPVSMNAFELISSSSEFSLENLFE). Residues 343–372 (KKETRFTSQRSASEIMSKMEETAKPLGFNV) form a PPI region.

This sequence belongs to the protein kinase superfamily. CAMK Ser/Thr protein kinase family. SNF1 subfamily. Interacts with CBL2 and CBL3. Mn(2+) serves as cofactor. As to expression, expressed at low levels in roots and shoots. Detected in root vascular bundles and in the leaf vascular tissue and hydathode, but not in root tips.

It is found in the cytoplasm. The protein localises to the nucleus. It catalyses the reaction L-seryl-[protein] + ATP = O-phospho-L-seryl-[protein] + ADP + H(+). The catalysed reaction is L-threonyl-[protein] + ATP = O-phospho-L-threonyl-[protein] + ADP + H(+). Functionally, CIPK serine-threonine protein kinases interact with CBL proteins. Binding of a CBL protein to the regulatory NAF domain of CIPK protein lead to the activation of the kinase in a calcium-dependent manner. Involved in K(+) homeostasis under low-K(+) stress. The protein is CBL-interacting serine/threonine-protein kinase 9 (CIPK9) of Arabidopsis thaliana (Mouse-ear cress).